We begin with the raw amino-acid sequence, 296 residues long: Large ribosomal subunit protein uL15m (296 aa).

Residues 1 to 20 (MAASGGSGGKATELLRCLPR) constitute a mitochondrion transit peptide. Positions 25–66 (NLRPNPGARHREKRRGRGIHGGRKSGRGHKGETQRGNQPRLG) are disordered. The span at 32 to 52 (ARHREKRRGRGIHGGRKSGRG) shows a compositional bias: basic residues.

The protein belongs to the universal ribosomal protein uL15 family. In terms of assembly, component of the mitochondrial ribosome large subunit (39S) which comprises a 16S rRNA and about 50 distinct proteins.

The protein resides in the mitochondrion. The chain is Large ribosomal subunit protein uL15m (mrpl15) from Xenopus laevis (African clawed frog).